A 63-amino-acid polypeptide reads, in one-letter code: Large ribosomal subunit protein uL29 (63 aa).

It belongs to the universal ribosomal protein uL29 family.

The sequence is that of Large ribosomal subunit protein uL29 from Haemophilus influenzae (strain 86-028NP).